The sequence spans 1419 residues: Formin-1 (1419 aa).

Residues 1-622 (MEGTHCTLQL…TAEPQHQSPP (622 aa)) form a microtubule-binding region. Disordered stretches follow at residues 138 to 194 (DWQG…MGKD), 262 to 331 (LGRE…KVVA), 343 to 641 (VVKT…TPKD), and 685 to 711 (SLTE…DTEE). Residues 151-163 (RSTHGNKKPRRSS) are compositionally biased toward basic residues. The segment covering 298–317 (SHQDPEKHPEAEKDEMEKPA) has biased composition (basic and acidic residues). The segment covering 394–411 (RSSQSPAGETASISSVSA) has biased composition (polar residues). Over residues 425-438 (IESEKLDEAPEGKR) the composition is skewed to basic and acidic residues. A mediates interaction with alpha-catenin region spans residues 456–842 (NKRRAGLPLG…LNISSLSQLS (387 aa)). Positions 504–517 (FNNSASQSSTHKQT) are enriched in polar residues. Positions 520 to 529 (VPSPLSPRLP) are enriched in pro residues. The segment covering 614 to 623 (AEPQHQSPPG) has biased composition (polar residues). A compositionally biased stretch (basic and acidic residues) spans 685 to 694 (SLTEQDDRTP). The stretch at 720–774 (AEYQAAILHLKREHKEEIENLQAQFELRAFHIRGEHAMITARLEETIENLKHELE) forms a coiled coil. Disordered stretches follow at residues 859–978 (GMAS…AIEP) and 1390–1419 (SEKK…VTTN). 2 stretches are compositionally biased toward pro residues: residues 868-882 (LPPP…PPLP) and 890-958 (PAPP…PPPG). The region spanning 870–957 (PPPASIPPPP…PPGLAPPPPP (88 aa)) is the FH1 domain. Residues 972 to 1388 (RKPAIEPSCP…KMAQESVSKL (417 aa)) form the FH2 domain.

It belongs to the formin homology family. Cappuccino subfamily. Interacts with alpha-catenin and may interact with tubulin. Phosphorylated on serine and possibly threonine residues.

It is found in the nucleus. The protein localises to the cytoplasm. Its subcellular location is the cell junction. The protein resides in the adherens junction. It localises to the cell membrane. Its function is as follows. Plays a role in the formation of adherens junction and the polymerization of linear actin cables. This is Formin-1 (FMN1) from Homo sapiens (Human).